Reading from the N-terminus, the 149-residue chain is Large ribosomal subunit protein uL15C (149 aa).

The disordered stretch occupies residues 21–40; sequence RIGKHRKQRGGRGNAGGQHH.

The protein belongs to the universal ribosomal protein uL15 family. In terms of assembly, component of the large ribosomal subunit.

The protein localises to the cytoplasm. It is found in the cytosol. It localises to the endoplasmic reticulum. In terms of biological role, component of the large ribosomal subunit. The ribosome is a large ribonucleoprotein complex responsible for the synthesis of proteins in the cell. The protein is Large ribosomal subunit protein uL15C (rpl27a-3) of Entamoeba histolytica (strain ATCC 30459 / HM-1:IMSS / ABRM).